The chain runs to 447 residues: Phosphoglucosamine mutase (447 aa).

Serine 103 (phosphoserine intermediate) is an active-site residue. The Mg(2+) site is built by serine 103, aspartate 242, aspartate 244, and aspartate 246. Serine 103 is subject to Phosphoserine.

It belongs to the phosphohexose mutase family. The cofactor is Mg(2+). Post-translationally, activated by phosphorylation.

The enzyme catalyses alpha-D-glucosamine 1-phosphate = D-glucosamine 6-phosphate. Functionally, catalyzes the conversion of glucosamine-6-phosphate to glucosamine-1-phosphate. In Dinoroseobacter shibae (strain DSM 16493 / NCIMB 14021 / DFL 12), this protein is Phosphoglucosamine mutase.